A 208-amino-acid polypeptide reads, in one-letter code: Anthranilate synthase component 2 (208 aa).

The region spanning 3–208 is the Glutamine amidotransferase type-1 domain; the sequence is HVVLIDNHDS…SRCVEQLLAN (206 aa). 53-55 provides a ligand contact to L-glutamine; sequence GPG. Residue Cys-80 is the Nucleophile; for GATase activity of the active site. L-glutamine is bound by residues Gln-84 and 145–146; that span reads SL. Residues His-185 and Glu-187 each act as for GATase activity in the active site.

In terms of assembly, heterotetramer consisting of two non-identical subunits: a beta subunit (TrpG) and a large alpha subunit (TrpE).

The enzyme catalyses chorismate + L-glutamine = anthranilate + pyruvate + L-glutamate + H(+). It functions in the pathway amino-acid biosynthesis; L-tryptophan biosynthesis; L-tryptophan from chorismate: step 1/5. Its function is as follows. Part of a heterotetrameric complex that catalyzes the two-step biosynthesis of anthranilate, an intermediate in the biosynthesis of L-tryptophan. In the first step, the glutamine-binding beta subunit (TrpG) of anthranilate synthase (AS) provides the glutamine amidotransferase activity which generates ammonia as a substrate that, along with chorismate, is used in the second step, catalyzed by the large alpha subunit of AS (TrpE) to produce anthranilate. In the absence of TrpG, TrpE can synthesize anthranilate directly from chorismate and high concentrations of ammonia. The chain is Anthranilate synthase component 2 (trpG) from Corynebacterium glutamicum (strain ATCC 13032 / DSM 20300 / JCM 1318 / BCRC 11384 / CCUG 27702 / LMG 3730 / NBRC 12168 / NCIMB 10025 / NRRL B-2784 / 534).